We begin with the raw amino-acid sequence, 680 residues long: Chaperone protein dnaK3 (680 aa).

Threonine 205 is subject to Phosphothreonine; by autocatalysis. The segment at 640–680 (GRERRRDDDEDEWAEPPRTRRSRSYSQRADSAPWDDWDDDW) is disordered.

It belongs to the heat shock protein 70 family.

Functionally, acts as a chaperone. This Thermosynechococcus vestitus (strain NIES-2133 / IAM M-273 / BP-1) protein is Chaperone protein dnaK3 (dnaK3).